A 384-amino-acid polypeptide reads, in one-letter code: Zinc transporter 7 (384 aa).

A signal peptide spans 1–25 (MERFVQFLRRGNGLMAASLAAGSCA). The Extracellular portion of the chain corresponds to 26 to 46 (EEVAKAEGAGCRDDAAALRLK). Residues 47–67 (GVAMATILVAGVVGVGLPLAG) form a helical membrane-spanning segment. At 68–79 (RKRRALRTDSAA) the chain is on the cytoplasmic side. The helical transmembrane segment at 80–100 (FVAAKAFAAGVILATGFVHML) threads the bilayer. Residues 101-119 (HDAEHALSSPCLPAHPWRS) are Extracellular-facing. A helical membrane pass occupies residues 120-140 (FPFPGFVAMSAALATLVLDFL). The Cytoplasmic segment spans residues 141–227 (ATRFYEGKHR…GEGEVPAQVR (87 aa)). The interval 185–222 (DNKAPLLQPHSHSHSHPHGHGHGHELAQPEGSGGEGEV) is disordered. The segment covering 195–205 (SHSHSHPHGHG) has biased composition (basic residues). The chain crosses the membrane as a helical span at residues 228–248 (SVVVSQILEMGIVSHSVIIGL). The Extracellular portion of the chain corresponds to 249–261 (SLGVSRSPCTIRP). A helical membrane pass occupies residues 262–282 (LVAALSFHQFFEGFALGGCIA). The Cytoplasmic segment spans residues 283-291 (QAQFKTLSA). Residues 292–312 (AIMACFFAITTPAGIAAGAGV) form a helical membrane-spanning segment. The Extracellular portion of the chain corresponds to 313 to 323 (ASFYNANSPRA). Residues 324–344 (LVVEGILDSVSAGILIYMSLV) traverse the membrane as a helical segment. Residues 345-363 (DLIAADFLGGKMTGSTRQQ) are Cytoplasmic-facing. Residues 364–384 (VMAYIALFLGALSMSSLAIWA) traverse the membrane as a helical segment.

It belongs to the ZIP transporter (TC 2.A.5) family.

It localises to the cell membrane. Its function is as follows. Zinc transporter that may be involved in zinc uptake from the rhizosphere. The sequence is that of Zinc transporter 7 (ZIP7) from Oryza sativa subsp. japonica (Rice).